A 279-amino-acid polypeptide reads, in one-letter code: Protein phosphatase 1 regulatory subunit 3E (279 aa).

Phosphoserine is present on residues S16 and S33. The segment at 28–87 is disordered; sequence RSQRPSLEEESEEEPGEGGTRPGARSRAHVPGRGRRARSAPAGGGGARTARSRSPDTRKR. Basic residues predominate over residues 51-65; the sequence is ARSRAHVPGRGRRAR. Position 66 is a phosphoserine (S66). Residues 87-90 carry the PP1-binding motif motif; that stretch reads RVRF. The 106-residue stretch at 154 to 259 folds into the CBM21 domain; that stretch reads AARLQAQRIC…NNGGRDYALL (106 aa). Positions 176–198 are glycogen-binding motif; the sequence is GSARVLDLAYEKRVSVRWSADGW. Positions 248-256 are substrate-binding motif; that stretch reads WDNNGGRDY.

Its function is as follows. Acts as a glycogen-targeting subunit for PP1. PP1 is involved in glycogen metabolism and contributes to the activation of glycogen synthase leading to an increase in glycogen synthesis. The sequence is that of Protein phosphatase 1 regulatory subunit 3E (Ppp1r3e) from Mus musculus (Mouse).